A 358-amino-acid polypeptide reads, in one-letter code: Serine/threonine-protein phosphatase 2A activator 2 (358 aa).

It belongs to the PTPA-type PPIase family.

Its subcellular location is the cytoplasm. The enzyme catalyses [protein]-peptidylproline (omega=180) = [protein]-peptidylproline (omega=0). PPIases accelerate the folding of proteins. It catalyzes the cis-trans isomerization of proline imidic peptide bonds in oligopeptides. Acts as a regulatory subunit for PP2A-like phosphatases modulating their activity or substrate specificity, probably by inducing a conformational change in the catalytic subunit, a direct target of the PPIase. Can reactivate inactive phosphatase PP2A-phosphatase methylesterase complexes (PP2Ai) in presence of ATP and Mg(2+) by dissociating the inactive form from the complex. The chain is Serine/threonine-protein phosphatase 2A activator 2 (RRD2) from Candida albicans (strain SC5314 / ATCC MYA-2876) (Yeast).